The sequence spans 537 residues: Chaperonin GroEL 1 (537 aa).

Residues 29–32 (TLGP), 86–90 (DGTTT), Gly-413, 478–480 (NAA), and Asp-494 contribute to the ATP site.

Belongs to the chaperonin (HSP60) family. As to quaternary structure, forms a cylinder of 14 subunits composed of two heptameric rings stacked back-to-back. Interacts with the co-chaperonin GroES.

It localises to the cytoplasm. It catalyses the reaction ATP + H2O + a folded polypeptide = ADP + phosphate + an unfolded polypeptide.. Together with its co-chaperonin GroES, plays an essential role in assisting protein folding. The GroEL-GroES system forms a nano-cage that allows encapsulation of the non-native substrate proteins and provides a physical environment optimized to promote and accelerate protein folding. The chain is Chaperonin GroEL 1 from Corynebacterium efficiens (strain DSM 44549 / YS-314 / AJ 12310 / JCM 11189 / NBRC 100395).